The sequence spans 111 residues: UPF0060 membrane protein NFA_36830 (111 aa).

The next 4 membrane-spanning stretches (helical) occupy residues 7–27 (LVLF…VWQG), 33–53 (GLWW…VATF), 62–82 (VLAA…VLVD), and 91–111 (LLGA…PRGG).

It belongs to the UPF0060 family.

It is found in the cell membrane. The sequence is that of UPF0060 membrane protein NFA_36830 from Nocardia farcinica (strain IFM 10152).